The sequence spans 1832 residues: Multifunctional protein pyr-3 (1832 aa).

Residues 2–400 are GATase (Glutamine amidotransferase); sequence AATVYRPATA…PGPRDTEFLF (399 aa). L-glutamine contacts are provided by Ser-64, Gly-273, and Gly-275. Residues 228–413 form the Glutamine amidotransferase type-1 domain; it reads RILCLDVGMK…IQTVAKCTTD (186 aa). Cys-302 acts as the Nucleophile; for GATase activity in catalysis. L-glutamine contacts are provided by Leu-303, Gln-306, Asn-344, Gly-346, and Tyr-347. Active-site for GATase activity residues include His-386 and Glu-388. A linker region spans residues 401 to 442; sequence DVFIQTVAKCTTDNTLLQKGVEFPGGTTEENERLHPRVDVKK. Residues 443–983 form a CPSase A region; the sequence is VLVLGSGGLS…SEHDVSFEDR (541 aa). The tract at residues 443 to 1484 is CPSase (Carbamoyl phosphate synthase); sequence VLVLGSGGLS…TNVKNAKILV (1042 aa). 12 residues coordinate ATP: Arg-560, Arg-600, Gly-606, Gly-607, Arg-637, Met-639, Glu-644, Gly-670, Ile-671, His-672, Gln-713, and Glu-727. ATP-grasp domains follow at residues 564-756 and 1102-1293; these read ARSM…KLGL and SRML…KAIM. 3 residues coordinate Mg(2+): Gln-713, Glu-727, and Asn-729. Mn(2+)-binding residues include Gln-713, Glu-727, and Asn-729. The segment at 984–1484 is CPSase B; the sequence is GVMVLGSGVY…TNVKNAKILV (501 aa). Residues Arg-1138, Lys-1177, Ile-1179, Glu-1184, Gly-1209, Val-1210, His-1211, Ser-1212, Gln-1252, and Glu-1264 each contribute to the ATP site. The Mg(2+) site is built by Gln-1252, Glu-1264, and Asn-1266. 3 residues coordinate Mn(2+): Gln-1252, Glu-1264, and Asn-1266. The 149-residue stretch at 1359–1507 folds into the MGS-like domain; it reads FKVPKKNILL…RDYQTSHTPL (149 aa). The interval 1485–1528 is linker; the sequence is EAIARYRDMEIGERDYQTSHTPLQLSGQVNFTLQDSLSRPHSFK. Residues 1529-1832 form an ATCase (Aspartate transcarbamylase) region; that stretch reads KAHVLSVEQY…MALLALVMSG (304 aa). The carbamoyl phosphate site is built by Arg-1581 and Thr-1582. Position 1609 (Lys-1609) interacts with L-aspartate. Arg-1630, His-1658, and Gln-1661 together coordinate carbamoyl phosphate. Arg-1691 and Arg-1754 together coordinate L-aspartate. Leu-1793 and Pro-1794 together coordinate carbamoyl phosphate.

In the N-terminal section; belongs to the CarA family. The protein in the central section; belongs to the CarB family. It in the C-terminal section; belongs to the aspartate/ornithine carbamoyltransferase superfamily. ATCase family. Mg(2+) serves as cofactor. Mn(2+) is required as a cofactor.

It localises to the cytoplasm. Its subcellular location is the nucleus. The enzyme catalyses hydrogencarbonate + L-glutamine + 2 ATP + H2O = carbamoyl phosphate + L-glutamate + 2 ADP + phosphate + 2 H(+). It carries out the reaction L-glutamine + H2O = L-glutamate + NH4(+). The catalysed reaction is hydrogencarbonate + NH4(+) + 2 ATP = carbamoyl phosphate + 2 ADP + phosphate + 2 H(+). It catalyses the reaction carbamoyl phosphate + L-aspartate = N-carbamoyl-L-aspartate + phosphate + H(+). Its pathway is pyrimidine metabolism; UMP biosynthesis via de novo pathway; (S)-dihydroorotate from bicarbonate: step 1/3. It participates in pyrimidine metabolism; UMP biosynthesis via de novo pathway; (S)-dihydroorotate from bicarbonate: step 2/3. With respect to regulation, both CPSase and ATCase activities are feedback inhibited by the end product UTP. Functionally, multifunctional protein that encodes the first 2 enzymatic activities of the de novo pyrimidine pathway: carbamoylphosphate synthetase (CPSase; EC 6.3.5.5) and aspartate transcarbamylase (ATCase; EC 2.1.3.2). The CPSase-function is accomplished in 2 steps, by a glutamine-dependent amidotransferase activity (GATase) that binds and cleaves glutamine to produce ammonia, followed by an ammonium-dependent carbamoyl phosphate synthetase, which reacts with the ammonia, hydrogencarbonate and ATP to form carbamoyl phosphate. The endogenously produced carbamoyl phosphate is sequestered and channeled to the ATCase active site. ATCase then catalyzes the formation of carbamoyl-L-aspartate from L-aspartate and carbamoyl phosphate. The sequence is that of Multifunctional protein pyr-3 (pyr-3) from Neurospora crassa (strain ATCC 24698 / 74-OR23-1A / CBS 708.71 / DSM 1257 / FGSC 987).